Reading from the N-terminus, the 370-residue chain is Protein rough sheath 2 (370 aa).

HTH myb-type domains are found at residues 1–53 and 54–108; these read MKER…KNYL and RPGI…EKQQ. 2 consecutive DNA-binding regions (H-T-H motif) follow at residues 27–53 and 81–104; these read WHLV…KNYL and WKKI…EVFK. The segment at 107 to 129 is disordered; that stretch reads QQRELRDSRRPPPEPSPDERGRY. A coiled-coil region spans residues 276-340; sequence KRVEQQLEME…QVKEEKMAEQ (65 aa).

In terms of assembly, homodimer. Interacts with AS2, WRKY1, HIRA, a probable histone chaperone, and RIK, a predicted RNA binding protein. In terms of tissue distribution, expressed in lateral organ promordia.

It localises to the nucleus. Its function is as follows. Transcription factor required for normal cell differentiation. Interacts directly with asymmetric leaves 2 (AS2) to repress the knox homeobox genes. The polypeptide is Protein rough sheath 2 (RS2) (Zea mays (Maize)).